The following is a 141-amino-acid chain: Large ribosomal subunit protein uL11 (141 aa).

Belongs to the universal ribosomal protein uL11 family. Part of the ribosomal stalk of the 50S ribosomal subunit. Interacts with L10 and the large rRNA to form the base of the stalk. L10 forms an elongated spine to which L12 dimers bind in a sequential fashion forming a multimeric L10(L12)X complex. In terms of processing, one or more lysine residues are methylated.

Its function is as follows. Forms part of the ribosomal stalk which helps the ribosome interact with GTP-bound translation factors. In Selenomonas ruminantium, this protein is Large ribosomal subunit protein uL11.